Consider the following 88-residue polypeptide: U2-ctenitoxin-Pn1a (88 aa).

Residues 1-17 (MKVAILILSILVLAVAS) form the signal peptide. A propeptide spanning residues 18–34 (ETIEEYRDDFAVEELER) is cleaved from the precursor. 5 disulfides stabilise this stretch: C37-C51, C44-C57, C48-C86, C50-C71, and C59-C69. K88 is a propeptide.

As to expression, expressed by the venom gland.

It is found in the secreted. Inhibits voltage-gated sodium channels (Nav). Causes scratching, lacrimation, hypersalivation, sweating and agitation followed by spastic paralysis of the anterior and posterior extremities and death at dose levels of 1.62 mg/mouse. Insecticidal to the larval and adult forms of the house fly. The chain is U2-ctenitoxin-Pn1a from Phoneutria nigriventer (Brazilian armed spider).